Reading from the N-terminus, the 171-residue chain is Shikimate kinase (171 aa).

14-19 lines the ATP pocket; the sequence is GAGKST. Position 18 (Ser-18) interacts with Mg(2+). 3 residues coordinate substrate: Asp-36, Arg-60, and Gly-82. ATP is bound at residue Arg-120. A substrate-binding site is contributed by Arg-139. Gln-156 serves as a coordination point for ATP.

Belongs to the shikimate kinase family. In terms of assembly, monomer. Mg(2+) is required as a cofactor.

The protein localises to the cytoplasm. The catalysed reaction is shikimate + ATP = 3-phosphoshikimate + ADP + H(+). Its pathway is metabolic intermediate biosynthesis; chorismate biosynthesis; chorismate from D-erythrose 4-phosphate and phosphoenolpyruvate: step 5/7. In terms of biological role, catalyzes the specific phosphorylation of the 3-hydroxyl group of shikimic acid using ATP as a cosubstrate. This Shewanella woodyi (strain ATCC 51908 / MS32) protein is Shikimate kinase.